The following is a 773-amino-acid chain: Elongin-A (773 aa).

Positions 4–79 (ESALQVVEKL…AQWKKLVPVE (76 aa)) constitute a TFIIS N-terminal domain. Residues 79 to 93 (ERNNEAEDQDFEKSN) show a composition bias toward basic and acidic residues. Residues 79–480 (ERNNEAEDQD…PRKVPTDVLP (402 aa)) form a disordered region. Residues 112–124 (YQESWQASGSQPY) are compositionally biased toward polar residues. The segment covering 136-156 (LPELERPHKVAHGHERRDERK) has biased composition (basic and acidic residues). The span at 162-174 (SPPYSSDPESSDY) shows a compositional bias: low complexity. Ser195 is modified (phosphoserine). The segment covering 239–248 (KPHKSSHKEK) has biased composition (basic residues). Composition is skewed to basic and acidic residues over residues 249–265 (RPVD…MGRE) and 271–304 (SSKE…EGNS). At Ser310 the chain carries Phosphoserine. 2 stretches are compositionally biased toward basic and acidic residues: residues 317 to 339 (SDNH…KNKQ) and 368 to 380 (QEGK…DRKS). Phosphoserine is present on residues Ser380 and Ser383. N6-acetyllysine is present on Lys430. At Ser515 the chain carries Phosphoserine. Residues 521 to 680 (EAGFTGRRMN…PPRDVRRRQE (160 aa)) are activation domain. Positions 549-558 (TLHQQCIRVL) are BC-box. The F-box domain occupies 565-609 (IFEVGGVPYSVLEPVLERCTPDQLYRIEECNHVLIEETDQLWKVH). Residues 671-747 (PPRDVRRRQE…VASSSVSYDP (77 aa)) are disordered. Over residues 704–718 (SSHVPASNSSSSFHS) the composition is skewed to low complexity. Positions 728 to 744 (PSTSSAHLAPVASSSVS) are enriched in polar residues.

As to quaternary structure, heterotrimer of an A (ELOA, ELOA2 or ELOA3P), ELOB and ELOC subunit. Part of a multisubunit ubiquitin ligase complex consisting of elongin BC complex (ELOB and ELOC), elongin A/ELOA, RBX1 and CUL5. Interacts with ERCC6; the interaction is induced by DNA damaging agents or inhibitors of RNA polymerase II elongation. Interacts (via BC-box) with CUL5.

It is found in the nucleus. SIII, also known as elongin, is a general transcription elongation factor that increases the RNA polymerase II transcription elongation past template-encoded arresting sites. Subunit A is transcriptionally active and its transcription activity is strongly enhanced by binding to the dimeric complex of the SIII regulatory subunits B and C (elongin BC complex). Functionally, as part of a multisubunit complex composed of elongin BC complex (ELOB and ELOC), elongin A/ELOA, RBX1 and CUL5; polyubiquitinates monoubiquitinated POLR2A. In Rattus norvegicus (Rat), this protein is Elongin-A (Eloa).